Reading from the N-terminus, the 709-residue chain is PP2C-like domain-containing protein CG9801 (709 aa).

Disordered regions lie at residues 121 to 222 (DCYG…NSER), 503 to 530 (LHPSTPPTRPARQSKAESPPNNAPSRPK), and 678 to 709 (GGGEEHNNGNENGDGGAISPVLQSKEFKETNF). Over residues 130 to 143 (PPVQVATQNSTRLT) the composition is skewed to polar residues. Over residues 182-196 (ANLAAASAGTDAGKA) the composition is skewed to low complexity. Residues 197–217 (NSDQNNRNVLNAKTEVSTDGD) show a composition bias toward polar residues. Positions 259 to 503 (SVSLYETNML…KSASAIYARL (245 aa)) constitute a PPM-type phosphatase domain.

The sequence is that of PP2C-like domain-containing protein CG9801 from Drosophila melanogaster (Fruit fly).